Consider the following 69-residue polypeptide: Dermaseptin-H3 (69 aa).

The signal sequence occupies residues 1–22 (MAFLKKSLFLVLFLGMVSLSIC). The propeptide occupies 23-43 (EEEKRENEDEEKQEDDEQSEM). Positions 24-44 (EEKRENEDEEKQEDDEQSEMK) are disordered. Acidic residues predominate over residues 30–40 (EDEEKQEDDEQ). Leucine amide is present on Leu66. The propeptide occupies 68–69 (EQ).

This sequence belongs to the frog skin active peptide (FSAP) family. Dermaseptin subfamily. In terms of tissue distribution, expressed by the skin glands.

It localises to the secreted. Possesses a potent antimicrobial activity against Gram-positive and Gram-negative bacteria. Probably acts by disturbing membrane functions with its amphipathic structure. This is Dermaseptin-H3 from Pithecopus azureus (Orange-legged monkey tree frog).